Here is a 99-residue protein sequence, read N- to C-terminus: Aspartyl/glutamyl-tRNA(Asn/Gln) amidotransferase subunit C (99 aa).

Belongs to the GatC family. In terms of assembly, heterotrimer of A, B and C subunits.

The catalysed reaction is L-glutamyl-tRNA(Gln) + L-glutamine + ATP + H2O = L-glutaminyl-tRNA(Gln) + L-glutamate + ADP + phosphate + H(+). It carries out the reaction L-aspartyl-tRNA(Asn) + L-glutamine + ATP + H2O = L-asparaginyl-tRNA(Asn) + L-glutamate + ADP + phosphate + 2 H(+). Allows the formation of correctly charged Asn-tRNA(Asn) or Gln-tRNA(Gln) through the transamidation of misacylated Asp-tRNA(Asn) or Glu-tRNA(Gln) in organisms which lack either or both of asparaginyl-tRNA or glutaminyl-tRNA synthetases. The reaction takes place in the presence of glutamine and ATP through an activated phospho-Asp-tRNA(Asn) or phospho-Glu-tRNA(Gln). The protein is Aspartyl/glutamyl-tRNA(Asn/Gln) amidotransferase subunit C of Cupriavidus metallidurans (strain ATCC 43123 / DSM 2839 / NBRC 102507 / CH34) (Ralstonia metallidurans).